The chain runs to 76 residues: Acyl carrier protein (76 aa).

The 76-residue stretch at 1–76 (MSIEERVKKI…SAIDYVQNNQ (76 aa)) folds into the Carrier domain. Position 36 is an O-(pantetheine 4'-phosphoryl)serine (S36).

The protein belongs to the acyl carrier protein (ACP) family. In terms of processing, 4'-phosphopantetheine is transferred from CoA to a specific serine of apo-ACP by AcpS. This modification is essential for activity because fatty acids are bound in thioester linkage to the sulfhydryl of the prosthetic group.

The protein resides in the cytoplasm. Its pathway is lipid metabolism; fatty acid biosynthesis. Carrier of the growing fatty acid chain in fatty acid biosynthesis. The polypeptide is Acyl carrier protein (Haemophilus influenzae (strain 86-028NP)).